Reading from the N-terminus, the 1021-residue chain is Ras-related protein Rab-44 (1021 aa).

Residues 1–40 (METGQRTSRKVRKLGSNRRRQTREPADGEGAAVAPEPESW) are disordered. A compositionally biased stretch (basic residues) spans 7-21 (TSRKVRKLGSNRRRQ). In terms of domain architecture, EF-hand spans 77–112 (GSKEESEMIFDWVDVERKGHLSLEEFSSGLKNIFGS). Positions 113-133 (SQSPHRLRRRKPLPSKRVSAT) are disordered. Positions 117–126 (HRLRRRKPLP) are enriched in basic residues. The stretch at 191–315 (LAKMTSRLQE…AGRLEEVRGQ (125 aa)) forms a coiled coil. 3 disordered regions span residues 339–405 (SFPG…QTPR), 419–483 (LFGQ…LLWG), and 495–827 (VLIP…GGPQ). The segment covering 443 to 467 (KDNKGVDPHEQDIRAEQPVEPHDPD) has biased composition (basic and acidic residues). Pro residues predominate over residues 501–514 (DGPPPPANSPPPQA). Residues 532–559 (PGSWAPPSGAQPGAGAGPQEPTQTPPTM) are compositionally biased toward low complexity. The span at 676–685 (SEEGKQEGRG) shows a compositional bias: basic and acidic residues. Composition is skewed to polar residues over residues 688–697 (DLSSEQSEQS) and 710–727 (LPQQ…TPQA). Residues 736-759 (PGKSAPPRGSPPRGAQPGAGAGPQ) are compositionally biased toward low complexity. Residues 783 to 810 (HAEEQGPPHSREPRAESRLEDPGMDSRE) show a composition bias toward basic and acidic residues. GTP-binding positions include 840 to 847 (GDSNVGKT), 888 to 892 (DTAGQ), and 946 to 949 (NKMD). 2 S-geranylgeranyl cysteine lipidation sites follow: Cys-1019 and Cys-1020.

Belongs to the small GTPase superfamily. Rab family.

The protein resides in the cell membrane. The chain is Ras-related protein Rab-44 (RAB44) from Homo sapiens (Human).